A 307-amino-acid polypeptide reads, in one-letter code: Upstream stimulatory factor 1 (307 aa).

Disordered regions lie at residues 104-131 (DDNG…SVGG) and 168-207 (QGGS…VERR). The segment covering 122 to 131 (PTDSSTSVGG) has biased composition (low complexity). Residues 187–207 (DGPRTTRDDKRRAQHNEVERR) are compositionally biased toward basic and acidic residues. The region spanning 196–251 (KRRAQHNEVERRRRDKINNWIVQLSKIIPDCSMESTKTGQSKGGILSKACDYIQEL) is the bHLH domain. Positions 268 to 289 (LQMDNEVLRQQVEDLKNNNLTL) are leucine-zipper.

Efficient DNA binding requires dimerization with another bHLH protein. Binds DNA as a homodimer or a heterodimer. In terms of tissue distribution, oocyte and somatic tissue. Oocytic and somatic forms of this protein exist, probably as a result of post-translational modifications or minor splicing differences.

Its subcellular location is the nucleus. In terms of biological role, may act as a regulator of transcription factor IIIA (TFIIIA) gene expression. This is Upstream stimulatory factor 1 (usf1) from Xenopus borealis (Kenyan clawed frog).